We begin with the raw amino-acid sequence, 430 residues long: GTPase Obg (430 aa).

The Obg domain maps to 1–158 (MFIDTAKVFV…LNIVLELKLL (158 aa)). The region spanning 159-331 (ADVGLLGFPN…VMKEAARILK (173 aa)) is the OBG-type G domain. Residues 165 to 172 (GFPNVGKS), 190 to 194 (FTTLK), 212 to 215 (DIPG), 282 to 285 (NKSD), and 312 to 314 (SAA) contribute to the GTP site. Residues Ser172 and Thr192 each contribute to the Mg(2+) site. In terms of domain architecture, OCT spans 345-430 (MYIPEEKRFT…LNDFEFEYIL (86 aa)).

It belongs to the TRAFAC class OBG-HflX-like GTPase superfamily. OBG GTPase family. In terms of assembly, monomer. Mg(2+) is required as a cofactor.

It localises to the cytoplasm. An essential GTPase which binds GTP, GDP and possibly (p)ppGpp with moderate affinity, with high nucleotide exchange rates and a fairly low GTP hydrolysis rate. Plays a role in control of the cell cycle, stress response, ribosome biogenesis and in those bacteria that undergo differentiation, in morphogenesis control. The sequence is that of GTPase Obg from Clostridium beijerinckii (strain ATCC 51743 / NCIMB 8052) (Clostridium acetobutylicum).